The primary structure comprises 315 residues: MSTQEPQKSLLGSLNSNATSHLGLATNQSEPWCLYVSIPDGLFLSLGLVSLVENVLVVIAITKNRNLHSPMYYFICCLALSDLMVSVSIVLETTIILLLEAGILVARVALVQQLDNLIDVLICGSMVSSLCFLGIIAIDRYISIFYALRYHSIVTLPRARRAVVGIWMVSIVSSTLFITYYKHTAVLLCLVTFFLAMLALMAILYAHMFTRACQHAQGIAQLHKRRRSIRQGFCLKGAATLTILLGIFFLCWGPFFLHLLLIVLCPQHPTCSCIFKNFNLFLLLIVLSSTVDPLIYAFRSQELRMTLKEVLLCSW.

Over 1–35 (MSTQEPQKSLLGSLNSNATSHLGLATNQSEPWCLY) the chain is Extracellular. N-linked (GlcNAc...) asparagine glycosylation is found at Asn-17 and Asn-27. The helical transmembrane segment at 36–61 (VSIPDGLFLSLGLVSLVENVLVVIAI) threads the bilayer. Residues 62–70 (TKNRNLHSP) lie on the Cytoplasmic side of the membrane. The helical transmembrane segment at 71-91 (MYYFICCLALSDLMVSVSIVL) threads the bilayer. Residues 92-116 (ETTIILLLEAGILVARVALVQQLDN) lie on the Extracellular side of the membrane. Residues 117–138 (LIDVLICGSMVSSLCFLGIIAI) form a helical membrane-spanning segment. The Cytoplasmic portion of the chain corresponds to 139 to 161 (DRYISIFYALRYHSIVTLPRARR). A helical transmembrane segment spans residues 162 to 181 (AVVGIWMVSIVSSTLFITYY). Over 182–189 (KHTAVLLC) the chain is Extracellular. Residues 190 to 209 (LVTFFLAMLALMAILYAHMF) traverse the membrane as a helical segment. Topologically, residues 210–238 (TRACQHAQGIAQLHKRRRSIRQGFCLKGA) are cytoplasmic. Residues 239 to 264 (ATLTILLGIFFLCWGPFFLHLLLIVL) form a helical membrane-spanning segment. Topologically, residues 265-277 (CPQHPTCSCIFKN) are extracellular. A helical membrane pass occupies residues 278–298 (FNLFLLLIVLSSTVDPLIYAF). Over 299 to 315 (RSQELRMTLKEVLLCSW) the chain is Cytoplasmic. The S-palmitoyl cysteine moiety is linked to residue Cys-313.

Belongs to the G-protein coupled receptor 1 family. In terms of assembly, interacts with MGRN1, but does not undergo MGRN1-mediated ubiquitination; this interaction competes with GNAS-binding and thus inhibits agonist-induced cAMP production. Interacts with OPN3; the interaction results in a decrease in MC1R-mediated cAMP signaling and ultimately a decrease in melanin production in melanocytes.

Its subcellular location is the cell membrane. Functionally, receptor for MSH (alpha, beta and gamma) and ACTH. The activity of this receptor is mediated by G proteins which activate adenylate cyclase. Mediates melanogenesis, the production of eumelanin (black/brown) and phaeomelanin (red/yellow), via regulation of cAMP signaling in melanocytes. The protein is Melanocyte-stimulating hormone receptor (Mc1r) of Mus musculus (Mouse).